The primary structure comprises 423 residues: Serine--tRNA ligase (423 aa).

Residue 231–233 participates in L-serine binding; that stretch reads TGE. 262-264 contributes to the ATP binding site; it reads RSE. Glu-285 provides a ligand contact to L-serine. 349 to 352 is a binding site for ATP; it reads EISS. An L-serine-binding site is contributed by Ser-385.

This sequence belongs to the class-II aminoacyl-tRNA synthetase family. Type-1 seryl-tRNA synthetase subfamily. Homodimer. The tRNA molecule binds across the dimer.

Its subcellular location is the cytoplasm. The enzyme catalyses tRNA(Ser) + L-serine + ATP = L-seryl-tRNA(Ser) + AMP + diphosphate + H(+). It catalyses the reaction tRNA(Sec) + L-serine + ATP = L-seryl-tRNA(Sec) + AMP + diphosphate + H(+). Its pathway is aminoacyl-tRNA biosynthesis; selenocysteinyl-tRNA(Sec) biosynthesis; L-seryl-tRNA(Sec) from L-serine and tRNA(Sec): step 1/1. Catalyzes the attachment of serine to tRNA(Ser). Is also able to aminoacylate tRNA(Sec) with serine, to form the misacylated tRNA L-seryl-tRNA(Sec), which will be further converted into selenocysteinyl-tRNA(Sec). The protein is Serine--tRNA ligase of Coxiella burnetii (strain CbuG_Q212) (Coxiella burnetii (strain Q212)).